The chain runs to 271 residues: Orotidine 5'-phosphate decarboxylase (271 aa).

Lys-95 acts as the Proton donor in catalysis.

Belongs to the OMP decarboxylase family. Type 2 subfamily.

The enzyme catalyses orotidine 5'-phosphate + H(+) = UMP + CO2. The protein operates within pyrimidine metabolism; UMP biosynthesis via de novo pathway; UMP from orotate: step 2/2. The sequence is that of Orotidine 5'-phosphate decarboxylase (pyrF) from Ralstonia nicotianae (strain ATCC BAA-1114 / GMI1000) (Ralstonia solanacearum).